The following is a 142-amino-acid chain: SLSDKDKAAVRALWSKIGKSSDAIGNDALSRMIVVYPQTKIYFSHWPDVTPGSPNIKAHGKKVMGGIALAVSKIDDLKTGLMELSEQHAYKLRVDPSNFKILNHCILVVISTMFPKEFTPEAHVSLDKFLSGVALALAERYR.

Position 1 is an N-acetylserine (Ser-1). The region spanning 1–142 (SLSDKDKAAV…VALALAERYR (142 aa)) is the Globin domain. O2 is bound at residue His-59. His-88 is a heme b binding site.

The protein belongs to the globin family. Hb1 is a heterotetramer of two alpha-1 chains and two beta chains. HbC is a heterotetramer of two alpha-1 chains and two beta-C chains. As to expression, red blood cells.

Its function is as follows. Involved in oxygen transport from gills to the various peripheral tissues. The polypeptide is Hemoglobin subunit alpha-1 (hba1) (Trematomus newnesi (Dusky notothen)).